Here is a 361-residue protein sequence, read N- to C-terminus: Protein RecA (361 aa).

Gly77–Thr84 serves as a coordination point for ATP.

Belongs to the RecA family.

It is found in the cytoplasm. Functionally, can catalyze the hydrolysis of ATP in the presence of single-stranded DNA, the ATP-dependent uptake of single-stranded DNA by duplex DNA, and the ATP-dependent hybridization of homologous single-stranded DNAs. It interacts with LexA causing its activation and leading to its autocatalytic cleavage. The sequence is that of Protein RecA from Brucella suis (strain ATCC 23445 / NCTC 10510).